Consider the following 297-residue polypeptide: 33 kDa chaperonin (297 aa).

2 cysteine pairs are disulfide-bonded: Cys-234–Cys-236 and Cys-267–Cys-270.

It belongs to the HSP33 family. Under oxidizing conditions two disulfide bonds are formed involving the reactive cysteines. Under reducing conditions zinc is bound to the reactive cysteines and the protein is inactive.

The protein resides in the cytoplasm. Redox regulated molecular chaperone. Protects both thermally unfolding and oxidatively damaged proteins from irreversible aggregation. Plays an important role in the bacterial defense system toward oxidative stress. The polypeptide is 33 kDa chaperonin (Pseudoalteromonas atlantica (strain T6c / ATCC BAA-1087)).